A 426-amino-acid chain; its full sequence is Serine hydroxymethyltransferase (426 aa).

(6S)-5,6,7,8-tetrahydrofolate is bound by residues Leu121 and 125–127 (GHL). Lys230 bears the N6-(pyridoxal phosphate)lysine mark. (6S)-5,6,7,8-tetrahydrofolate is bound at residue 354–356 (SPF).

This sequence belongs to the SHMT family. As to quaternary structure, homodimer. The cofactor is pyridoxal 5'-phosphate.

The protein localises to the cytoplasm. It catalyses the reaction (6R)-5,10-methylene-5,6,7,8-tetrahydrofolate + glycine + H2O = (6S)-5,6,7,8-tetrahydrofolate + L-serine. It functions in the pathway one-carbon metabolism; tetrahydrofolate interconversion. The protein operates within amino-acid biosynthesis; glycine biosynthesis; glycine from L-serine: step 1/1. In terms of biological role, catalyzes the reversible interconversion of serine and glycine with tetrahydrofolate (THF) serving as the one-carbon carrier. This reaction serves as the major source of one-carbon groups required for the biosynthesis of purines, thymidylate, methionine, and other important biomolecules. Also exhibits THF-independent aldolase activity toward beta-hydroxyamino acids, producing glycine and aldehydes, via a retro-aldol mechanism. The protein is Serine hydroxymethyltransferase of Acaryochloris marina (strain MBIC 11017).